The primary structure comprises 101 residues: Small ribosomal subunit protein bS16 (101 aa).

Belongs to the bacterial ribosomal protein bS16 family.

In Ureaplasma urealyticum serovar 10 (strain ATCC 33699 / Western), this protein is Small ribosomal subunit protein bS16.